An 862-amino-acid chain; its full sequence is Eukaryotic translation initiation factor 3 subunit C (862 aa).

The span at M1–S10 shows a compositional bias: gly residues. A disordered region spans residues M1–S81. Residues S16 to G52 show a composition bias toward acidic residues. A PCI domain is found at F601–E775. The disordered stretch occupies residues R814–A862. Residues G819–R833 are compositionally biased toward gly residues. The segment covering G835–R844 has biased composition (low complexity). Over residues R845–A862 the composition is skewed to gly residues.

The protein belongs to the eIF-3 subunit C family. Component of the eukaryotic translation initiation factor 3 (eIF-3) complex.

Its subcellular location is the cytoplasm. Functionally, component of the eukaryotic translation initiation factor 3 (eIF-3) complex, which is involved in protein synthesis of a specialized repertoire of mRNAs and, together with other initiation factors, stimulates binding of mRNA and methionyl-tRNAi to the 40S ribosome. The eIF-3 complex specifically targets and initiates translation of a subset of mRNAs involved in cell proliferation. The chain is Eukaryotic translation initiation factor 3 subunit C (nip1) from Aspergillus clavatus (strain ATCC 1007 / CBS 513.65 / DSM 816 / NCTC 3887 / NRRL 1 / QM 1276 / 107).